The chain runs to 312 residues: Ribonuclease Z (312 aa).

Zn(2+) contacts are provided by histidine 62, histidine 64, aspartate 66, histidine 67, histidine 139, aspartate 210, and histidine 268. Aspartate 66 (proton acceptor) is an active-site residue.

This sequence belongs to the RNase Z family. In terms of assembly, homodimer. Zn(2+) serves as cofactor.

The enzyme catalyses Endonucleolytic cleavage of RNA, removing extra 3' nucleotides from tRNA precursor, generating 3' termini of tRNAs. A 3'-hydroxy group is left at the tRNA terminus and a 5'-phosphoryl group is left at the trailer molecule.. Functionally, zinc phosphodiesterase, which displays some tRNA 3'-processing endonuclease activity. Probably involved in tRNA maturation, by removing a 3'-trailer from precursor tRNA. The protein is Ribonuclease Z of Crocosphaera subtropica (strain ATCC 51142 / BH68) (Cyanothece sp. (strain ATCC 51142)).